A 282-amino-acid chain; its full sequence is Purine nucleoside phosphorylase (282 aa).

Phosphate-binding positions include Ser-46, His-78, and 103–105 (RTH). Glu-204 is an active-site residue. Residue Glu-204 participates in a purine D-ribonucleoside binding. Ser-223 is a binding site for phosphate. An a purine D-ribonucleoside-binding site is contributed by Asn-246.

The protein belongs to the PNP/MTAP phosphorylase family. In terms of assembly, homotrimer.

The enzyme catalyses a purine 2'-deoxy-D-ribonucleoside + phosphate = a purine nucleobase + 2-deoxy-alpha-D-ribose 1-phosphate. Its pathway is purine metabolism; purine nucleoside salvage. Its function is as follows. The purine nucleoside phosphorylases catalyze the phosphorolytic breakdown of the N-glycosidic bond in the beta-(deoxy)ribonucleoside molecules, with the formation of the corresponding free purine bases and pentose-1-phosphate. Cleaves guanosine, inosine, 2'-deoxyguanosine and 2'-deoxyinosine. In Cellulomonas sp, this protein is Purine nucleoside phosphorylase (punA).